Here is a 114-residue protein sequence, read N- to C-terminus: Photosystem II reaction center Psb28 protein (114 aa).

This sequence belongs to the Psb28 family. As to quaternary structure, part of the photosystem II complex.

The protein resides in the plastid. The protein localises to the chloroplast thylakoid membrane. This Gracilaria tenuistipitata var. liui (Red alga) protein is Photosystem II reaction center Psb28 protein.